The sequence spans 128 residues: Translation initiation factor 5A (128 aa).

Lys-35 is modified (hypusine).

The protein belongs to the eIF-5A family.

The protein resides in the cytoplasm. Functions by promoting the formation of the first peptide bond. The protein is Translation initiation factor 5A (eif5a) of Archaeoglobus fulgidus (strain ATCC 49558 / DSM 4304 / JCM 9628 / NBRC 100126 / VC-16).